The primary structure comprises 876 residues: MKKLKASEIRQKYLDFFVEKGHMVEPSAPLVPIDDDTLLWINSGVATLKKYFDGRETPKKPRIVNSQKAIRTNDIENVGFTARHHTFFEMLGNFSIGDYFKQEAIEFAWEFLTSDKWMGMEPDKLYVTIHPEDMEAYNIWHKDIGLEESRIIRIEGNFWDIGEGPSGPNTEIFYDRGEAYGQDDPAEEMYPGGENERYLEVWNLVFSEFNHNKDHSYTPLPNKNIDTGMGLERMASVSQNVRTNYETDLFMPIMNEIEKVSGKQYLVNNEQDVAFKVIADHIRTIAFAISDGALPANEGRGYVLRRLLRRAVRFSQTLGINEPFMYKLVDIVADIMEPYYPNVKEKADFIKRVIKSEEERFHETLEDGLAILNELIKKAKATTNEINGKDAFKLYDTYGFPIELTEEIAVQAGLKVDMTTFESEMQQQRDRARQARQNSQSMQVQSEVLKNITSASTFVGYDTATAQTTLTHLIYNGEEVSQVEAGETVYFMLTETPFYAVSGGQVADTGIVYNDNFEIAVSEVTKAPNGQNLHKGVVQFGQVNVGATVSAEVNQNDRRDIQKNHSATHLLHAALKSVLGDHVNQAGSLVEADRLRFDFSHFGPMTNDEIDQVERLVNEEIWKGIDVNIQEMDIASAKEMGAMALFGEKYGDVVRVVNMAPFSIELCGGIHVRNTSEIGLFKIVSESGTGAGVRRIEALTGKAAFLYLEDIQEKFNTMKSQMKVKSDDQVVEKLTQLQDEEKALLKQLEQRDKEITSLKMGNIEDQVEEINGYKVLVTEVDVPNAKAIRSTMDDFKSKLQDTIIILASNVDDKVSMVATVPKSLTNNVKAGDLIKQMAPIVGGKGGGRPDMAQGGGTQPENISKSLSFIKDYIKNL.

Zn(2+) is bound by residues His565, His569, Cys667, and His671.

The protein belongs to the class-II aminoacyl-tRNA synthetase family. Zn(2+) serves as cofactor.

The protein localises to the cytoplasm. The catalysed reaction is tRNA(Ala) + L-alanine + ATP = L-alanyl-tRNA(Ala) + AMP + diphosphate. In terms of biological role, catalyzes the attachment of alanine to tRNA(Ala) in a two-step reaction: alanine is first activated by ATP to form Ala-AMP and then transferred to the acceptor end of tRNA(Ala). Also edits incorrectly charged Ser-tRNA(Ala) and Gly-tRNA(Ala) via its editing domain. The sequence is that of Alanine--tRNA ligase from Staphylococcus aureus (strain Mu3 / ATCC 700698).